We begin with the raw amino-acid sequence, 180 residues long: Probable phospholipid hydroperoxide glutathione peroxidase (180 aa).

Cys-54 is an active-site residue.

It belongs to the glutathione peroxidase family.

The protein resides in the cytoplasm. It carries out the reaction a hydroperoxy polyunsaturated fatty acid + 2 glutathione = a hydroxy polyunsaturated fatty acid + glutathione disulfide + H2O. Functionally, protects cells and enzymes from oxidative damage, by catalyzing the reduction of hydrogen peroxide, lipid peroxides and organic hydroperoxide, by glutathione. This chain is Probable phospholipid hydroperoxide glutathione peroxidase (GPXHA-2), found in Helianthus annuus (Common sunflower).